A 498-amino-acid chain; its full sequence is Probable FAD-binding monooxygenase AlmA (498 aa).

The helical transmembrane segment at 4–24 (HIDILIVGAGISGIGIAAHLS) threads the bilayer. Positions 15, 36, 56, 62, and 104 each coordinate FAD. 54–56 (RSD) contacts NADP(+). NADP(+)-binding positions include 184–190 (SGATAIT), 208–209 (RS), and 292–293 (RL). V395 contacts FAD.

Belongs to the FAD-binding monooxygenase family. It depends on FAD as a cofactor.

The protein resides in the cell membrane. It functions in the pathway hydrocarbon metabolism; alkane degradation. Functionally, is able to catalyze the degradation of n-alkanes with C chain lengths of 32 and 36. Probably allows Acinetobacter baylyi strain ADP1 to grow on the long-chain n-alkane dotriacontane (C32H66) as a sole carbon source. In Acinetobacter baylyi (strain ATCC 33305 / BD413 / ADP1), this protein is Probable FAD-binding monooxygenase AlmA.